We begin with the raw amino-acid sequence, 664 residues long: Glycine--tRNA ligase beta subunit (664 aa).

The protein belongs to the class-II aminoacyl-tRNA synthetase family. As to quaternary structure, tetramer of two alpha and two beta subunits.

It localises to the cytoplasm. It carries out the reaction tRNA(Gly) + glycine + ATP = glycyl-tRNA(Gly) + AMP + diphosphate. This is Glycine--tRNA ligase beta subunit (glyS) from Aquifex aeolicus (strain VF5).